The sequence spans 556 residues: Interleukin-1 receptor-like 1 (556 aa).

Residues 1–18 form the signal peptide; it reads MGFWILAILTILMYSTAA. Ig-like C2-type domains are found at residues 19–103 and 114–197; these read KFSK…ANVT and PDYL…VTAT. Residues 19-328 are Extracellular-facing; sequence KFSKQSWGLE…SRKNPIDHHS (310 aa). Cys-36 and Cys-87 are oxidised to a cystine. N-linked (GlcNAc...) asparagine glycans are attached at residues Asn-54, Asn-95, Asn-101, Asn-140, and Asn-191. 2 cysteine pairs are disulfide-bonded: Cys-111–Cys-151 and Cys-133–Cys-181. The segment at 198 to 211 is flexible linker; sequence RSFTVKDEQGFSLF. One can recognise an Ig-like C2-type 3 domain in the interval 212 to 319; that stretch reads PVIGAPAQNE…GLRRHTVRLS (108 aa). 3 N-linked (GlcNAc...) asparagine glycosylation sites follow: Asn-232, Asn-254, and Asn-273. Intrachain disulfides connect Cys-235-Cys-303 and Cys-238-Cys-282. Lys-321 is covalently cross-linked (Glycyl lysine isopeptide (Lys-Gly) (interchain with G-Cter in ubiquitin)). Residues 329–349 form a helical membrane-spanning segment; that stretch reads IYCIIAVCSVFLMLINVLVII. The Cytoplasmic segment spans residues 350 to 556; that stretch reads LKMFWIEATL…SLTPLAAQKQ (207 aa). Positions 375–535 constitute a TIR domain; sequence KLYDAYVVYP…KFWKHVRYQM (161 aa). The active site involves Glu-461.

The protein belongs to the interleukin-1 receptor family. In terms of assembly, interacts with MYD88, IRAK1, IRAK4, and TRAF6. Bound to its ligand IL-33, interacts with IL1RAP to form the minimal interleukin-33 signaling complex with a 1:1:1 stoichiometry. Interacts with KIT (bound to KITLG/SCF). A mast cell-specific KITLG/SCF-induced interleukin-33 signaling complex contains IL1RL1, IL1RAP, KIT and MYD88. Interacts with TMED1. Ubiquitinated at Lys-321 in a FBXL19-mediated manner; leading to proteasomal degradation. Ubiquitination by TRAF6 via 'Lys-27'-linked polyubiquitination and deubiquitination by USP38 serves as a critical regulatory mechanism for fine-tuning IL1RL1-mediated inflammatory response. As to expression, highly expressed in kidney, lung, placenta, stomach, skeletal muscle, colon and small intestine. Isoform A is prevalently expressed in the lung, testis, placenta, stomach and colon. Isoform B is more abundant in the brain, kidney and the liver. Isoform C is not detected in brain, heart, liver, kidney and skeletal muscle. Expressed on T-cells in fibrotic liver; at protein level. Overexpressed in fibrotic and cirrhotic liver.

Its subcellular location is the cell membrane. The protein localises to the secreted. It catalyses the reaction NAD(+) + H2O = ADP-D-ribose + nicotinamide + H(+). In terms of biological role, receptor for interleukin-33 (IL-33) which plays crucial roles in innate and adaptive immunity, contributing to tissue homeostasis and responses to environmental stresses together with coreceptor IL1RAP. Its stimulation recruits MYD88, IRAK1, IRAK4, and TRAF6, followed by phosphorylation of MAPK3/ERK1 and/or MAPK1/ERK2, MAPK14, and MAPK8. Possibly involved in helper T-cell function. Upon tissue injury, induces UCP2-dependent mitochondrial rewiring that attenuates the generation of reactive oxygen species and preserves the integrity of Krebs cycle required for persistent production of itaconate and subsequent GATA3-dependent differentiation of inflammation-resolving alternatively activated macrophages. Its function is as follows. Inhibits IL-33 signaling. The chain is Interleukin-1 receptor-like 1 (IL1RL1) from Homo sapiens (Human).